We begin with the raw amino-acid sequence, 290 residues long: MAEAYQIQSNGDPQSKPLLELYVKASGIDARRIGADLFCQEFWMELYALYEIGVARVEVKTVNVNSEAFKKNFLGAQPPIMIEEEKELTYTDNREIEGRIFHLAKEFNVPLFEKDPSAEKRIENLYRNFKLFLRAKVEFDKGKKEPSRVEDLPAQIKVHYNRVCEQLSNIDQLLSERKSRYLLGNSMTEYDCELMPRLHHIRIIGLSLLGFDIPHNFTHLWAYILTAYRTAAFIESCPADQDIIHHYKEQMNLFTNQRETLQSPTKTHTIPEKVLSDIRVKGLAPDVNVH.

The helical transmembrane segment at 37-57 (LFCQEFWMELYALYEIGVARV) threads the bilayer.

It belongs to the chloride channel CLIC family. In terms of assembly, monomer. As to expression, expressed in the secretory system, hypodermis, vulva, pharyngeal muscle, rectal gland, tubular rectal epithelium cells, and tubular neuronal support cells in the head and tail.

Its subcellular location is the cytoplasm. The protein resides in the membrane. In terms of biological role, may insert into membranes and form chloride ion channels. Involved in the formation of the excretory canal. Required to prevent cystic lumenal expansions in the excretory cell. Not required for formation of the initial tube, but is required for regulating the size of the tube lumen as it grows. The chain is Chloride intracellular channel exc-4 (exc-4) from Caenorhabditis elegans.